The sequence spans 435 residues: Bifunctional protein GlmU (435 aa).

The tract at residues 1–224 is pyrophosphorylase; the sequence is MNDTSIIILA…EQNFMGINDK (224 aa). UDP-N-acetyl-alpha-D-glucosamine contacts are provided by residues 9–12, Lys-23, Gln-75, and 82–83; these read LAAG and GT. Asp-103 lines the Mg(2+) pocket. Gly-136, Glu-150, Asn-165, and Asn-222 together coordinate UDP-N-acetyl-alpha-D-glucosamine. Asn-222 lines the Mg(2+) pocket. Residues 225–245 form a linker region; that stretch reads FQLSVAEKIMQDEIKQDLMKA. The segment at 246-435 is N-acetyltransferase; the sequence is GVLMRLPESI…KFFGKNNAEK (190 aa). Residues Arg-309 and Lys-326 each coordinate UDP-N-acetyl-alpha-D-glucosamine. Residue His-337 is the Proton acceptor of the active site. 2 residues coordinate UDP-N-acetyl-alpha-D-glucosamine: Tyr-340 and Asn-351. Acetyl-CoA-binding positions include 360 to 361, Ser-379, Ala-397, and Arg-414; that span reads NY.

In the N-terminal section; belongs to the N-acetylglucosamine-1-phosphate uridyltransferase family. This sequence in the C-terminal section; belongs to the transferase hexapeptide repeat family. As to quaternary structure, homotrimer. Mg(2+) is required as a cofactor.

The protein resides in the cytoplasm. It carries out the reaction alpha-D-glucosamine 1-phosphate + acetyl-CoA = N-acetyl-alpha-D-glucosamine 1-phosphate + CoA + H(+). The catalysed reaction is N-acetyl-alpha-D-glucosamine 1-phosphate + UTP + H(+) = UDP-N-acetyl-alpha-D-glucosamine + diphosphate. It participates in nucleotide-sugar biosynthesis; UDP-N-acetyl-alpha-D-glucosamine biosynthesis; N-acetyl-alpha-D-glucosamine 1-phosphate from alpha-D-glucosamine 6-phosphate (route II): step 2/2. It functions in the pathway nucleotide-sugar biosynthesis; UDP-N-acetyl-alpha-D-glucosamine biosynthesis; UDP-N-acetyl-alpha-D-glucosamine from N-acetyl-alpha-D-glucosamine 1-phosphate: step 1/1. Its pathway is bacterial outer membrane biogenesis; LPS lipid A biosynthesis. Functionally, catalyzes the last two sequential reactions in the de novo biosynthetic pathway for UDP-N-acetylglucosamine (UDP-GlcNAc). The C-terminal domain catalyzes the transfer of acetyl group from acetyl coenzyme A to glucosamine-1-phosphate (GlcN-1-P) to produce N-acetylglucosamine-1-phosphate (GlcNAc-1-P), which is converted into UDP-GlcNAc by the transfer of uridine 5-monophosphate (from uridine 5-triphosphate), a reaction catalyzed by the N-terminal domain. This chain is Bifunctional protein GlmU, found in Campylobacter curvus (strain 525.92).